A 343-amino-acid polypeptide reads, in one-letter code: NADH-quinone oxidoreductase subunit H (343 aa).

The next 8 membrane-spanning stretches (helical) occupy residues 19–39 (VAWTLVKIMALVVPLMLGVAY), 89–109 (ALFILGPILAIAPALAAWAVI), 124–144 (LLYVMAITSMGVYGVIIAGWA), 158–178 (AAQIVSYEIAMGFALVGVLMA), 198–218 (WYLWPLFPLFVVYLVAGVAET), 257–277 (ILVAALTTLMFLGGWLSPVAF), 279–299 (PDGIVWWLLKTGFVLFLFLWF), and 314–334 (LGWKVFIPITIVWIVFVGGMM).

The protein belongs to the complex I subunit 1 family. As to quaternary structure, NDH-1 is composed of 14 different subunits. Subunits NuoA, H, J, K, L, M, N constitute the membrane sector of the complex.

The protein resides in the cell inner membrane. It catalyses the reaction a quinone + NADH + 5 H(+)(in) = a quinol + NAD(+) + 4 H(+)(out). In terms of biological role, NDH-1 shuttles electrons from NADH, via FMN and iron-sulfur (Fe-S) centers, to quinones in the respiratory chain. The immediate electron acceptor for the enzyme in this species is believed to be ubiquinone. Couples the redox reaction to proton translocation (for every two electrons transferred, four hydrogen ions are translocated across the cytoplasmic membrane), and thus conserves the redox energy in a proton gradient. This subunit may bind ubiquinone. The sequence is that of NADH-quinone oxidoreductase subunit H from Thiobacillus denitrificans (strain ATCC 25259 / T1).